The following is a 515-amino-acid chain: Histidine ammonia-lyase (515 aa).

Residues 145–147 (ASG) constitute a cross-link (5-imidazolinone (Ala-Gly)). Serine 146 bears the 2,3-didehydroalanine (Ser) mark.

The protein belongs to the PAL/histidase family. Contains an active site 4-methylidene-imidazol-5-one (MIO), which is formed autocatalytically by cyclization and dehydration of residues Ala-Ser-Gly.

The protein resides in the cytoplasm. The enzyme catalyses L-histidine = trans-urocanate + NH4(+). Its pathway is amino-acid degradation; L-histidine degradation into L-glutamate; N-formimidoyl-L-glutamate from L-histidine: step 1/3. The polypeptide is Histidine ammonia-lyase (Gluconacetobacter diazotrophicus (strain ATCC 49037 / DSM 5601 / CCUG 37298 / CIP 103539 / LMG 7603 / PAl5)).